Reading from the N-terminus, the 89-residue chain is UPF0237 protein CA_C0478 (89 aa).

Residues 4–78 (IITVIGKDKV…KKLGVSIKIQ (75 aa)) form the ACT domain.

The protein belongs to the UPF0237 family.

This chain is UPF0237 protein CA_C0478, found in Clostridium acetobutylicum (strain ATCC 824 / DSM 792 / JCM 1419 / IAM 19013 / LMG 5710 / NBRC 13948 / NRRL B-527 / VKM B-1787 / 2291 / W).